A 940-amino-acid chain; its full sequence is Isoleucine--tRNA ligase (940 aa).

Positions 58–68 (PYANGSIHIGH) match the 'HIGH' region motif. An L-isoleucyl-5'-AMP-binding site is contributed by glutamate 564. The short motif at 605 to 609 (KMSKS) is the 'KMSKS' region element. ATP is bound at residue lysine 608. Residues cysteine 903, cysteine 906, cysteine 923, and cysteine 926 each coordinate Zn(2+).

The protein belongs to the class-I aminoacyl-tRNA synthetase family. IleS type 1 subfamily. As to quaternary structure, monomer. Requires Zn(2+) as cofactor.

It localises to the cytoplasm. The catalysed reaction is tRNA(Ile) + L-isoleucine + ATP = L-isoleucyl-tRNA(Ile) + AMP + diphosphate. Functionally, catalyzes the attachment of isoleucine to tRNA(Ile). As IleRS can inadvertently accommodate and process structurally similar amino acids such as valine, to avoid such errors it has two additional distinct tRNA(Ile)-dependent editing activities. One activity is designated as 'pretransfer' editing and involves the hydrolysis of activated Val-AMP. The other activity is designated 'posttransfer' editing and involves deacylation of mischarged Val-tRNA(Ile). This is Isoleucine--tRNA ligase from Shewanella baltica (strain OS195).